Reading from the N-terminus, the 216-residue chain is Deoxyribose-phosphate aldolase (216 aa).

The active-site Proton donor/acceptor is D89. K152 functions as the Schiff-base intermediate with acetaldehyde in the catalytic mechanism. K181 (proton donor/acceptor) is an active-site residue.

The protein belongs to the DeoC/FbaB aldolase family. DeoC type 1 subfamily.

The protein localises to the cytoplasm. It carries out the reaction 2-deoxy-D-ribose 5-phosphate = D-glyceraldehyde 3-phosphate + acetaldehyde. The protein operates within carbohydrate degradation; 2-deoxy-D-ribose 1-phosphate degradation; D-glyceraldehyde 3-phosphate and acetaldehyde from 2-deoxy-alpha-D-ribose 1-phosphate: step 2/2. Functionally, catalyzes a reversible aldol reaction between acetaldehyde and D-glyceraldehyde 3-phosphate to generate 2-deoxy-D-ribose 5-phosphate. The sequence is that of Deoxyribose-phosphate aldolase from Clostridium tetani (strain Massachusetts / E88).